Here is a 734-residue protein sequence, read N- to C-terminus: Putative protocadherin beta-18 (734 aa).

5 Cadherin domains span residues 1 to 79, 80 to 188, 189 to 293, 294 to 398, and 399 to 508; these read MWKT…TPTF, LNNH…APEF, EKPV…PPEI, AMTS…APIF, and TQTS…SPFV. Asn-115 carries an N-linked (GlcNAc...) asparagine glycan. Residues Asn-365 and Asn-383 are each glycosylated (N-linked (GlcNAc...) asparagine). N-linked (GlcNAc...) asparagine glycosylation occurs at Asn-514. One can recognise a Cadherin 6 domain in the interval 515 to 621; it reads GSAPCTELVP…GFSQPYLPLT (107 aa). A helical transmembrane segment spans residues 638-658; sequence VVALASVSSLFLFSVFLFVAV.

It is found in the cell membrane. Functionally, potential calcium-dependent cell-adhesion protein. The polypeptide is Putative protocadherin beta-18 (PCDHB18P) (Homo sapiens (Human)).